The sequence spans 607 residues: Putative pentatricopeptide repeat-containing protein At1g09680 (607 aa).

PPR repeat units lie at residues 239 to 273 (NVYV…SLQP), 274 to 308 (TVVS…RTRP), 309 to 343 (DVFT…GLIP), 344 to 378 (NDVI…GLQP), 379 to 413 (DIVL…GLRP), 414 to 448 (DKIT…GIEL), 449 to 483 (DRVG…GIKP), 484 to 518 (DDVT…GHVP), and 519 to 553 (SVVT…GVVP).

The protein belongs to the PPR family. P subfamily.

This chain is Putative pentatricopeptide repeat-containing protein At1g09680, found in Arabidopsis thaliana (Mouse-ear cress).